The primary structure comprises 179 residues: Large ribosomal subunit protein uL5 (179 aa).

Belongs to the universal ribosomal protein uL5 family. As to quaternary structure, part of the 50S ribosomal subunit; part of the 5S rRNA/L5/L18/L25 subcomplex. Contacts the 5S rRNA and the P site tRNA. Forms a bridge to the 30S subunit in the 70S ribosome.

Functionally, this is one of the proteins that bind and probably mediate the attachment of the 5S RNA into the large ribosomal subunit, where it forms part of the central protuberance. In the 70S ribosome it contacts protein S13 of the 30S subunit (bridge B1b), connecting the 2 subunits; this bridge is implicated in subunit movement. Contacts the P site tRNA; the 5S rRNA and some of its associated proteins might help stabilize positioning of ribosome-bound tRNAs. This Microcystis aeruginosa (strain NIES-843 / IAM M-2473) protein is Large ribosomal subunit protein uL5.